Reading from the N-terminus, the 133-residue chain is Holo-[acyl-carrier-protein] synthase (133 aa).

Aspartate 8 and glutamate 57 together coordinate Mg(2+).

It belongs to the P-Pant transferase superfamily. AcpS family. Requires Mg(2+) as cofactor.

It is found in the cytoplasm. It catalyses the reaction apo-[ACP] + CoA = holo-[ACP] + adenosine 3',5'-bisphosphate + H(+). Its function is as follows. Transfers the 4'-phosphopantetheine moiety from coenzyme A to a Ser of acyl-carrier-protein. The chain is Holo-[acyl-carrier-protein] synthase from Parvibaculum lavamentivorans (strain DS-1 / DSM 13023 / NCIMB 13966).